A 159-amino-acid chain; its full sequence is Eukaryotic translation initiation factor 5A-1 (159 aa).

Positions 1 to 12 (MSDEEHHFESKA) are enriched in basic and acidic residues. Positions 1–23 (MSDEEHHFESKADAGASKTYPQQ) are disordered. At Lys-52 the chain carries Hypusine.

This sequence belongs to the eIF-5A family. Post-translationally, lys-52 undergoes hypusination, a unique post-translational modification that consists in the addition of a butylamino group from spermidine to lysine side chain, leading to the formation of the unusual amino acid hypusine. eIF-5As are the only known proteins to undergo this modification, which is essential for their function.

Its function is as follows. Translation factor that promotes translation elongation and termination, particularly upon ribosome stalling at specific amino acid sequence contexts. Binds between the exit (E) and peptidyl (P) site of the ribosome and promotes rescue of stalled ribosome: specifically required for efficient translation of polyproline-containing peptides as well as other motifs that stall the ribosome. Acts as a ribosome quality control (RQC) cofactor by joining the RQC complex to facilitate peptidyl transfer during CAT tailing step. The chain is Eukaryotic translation initiation factor 5A-1 from Solanum lycopersicum (Tomato).